The sequence spans 496 residues: Cobyric acid synthase (496 aa).

Residues 250–437 enclose the GATase cobBQ-type domain; that stretch reads TLKVIAPALP…LHGLFESPQA (188 aa). Residue Cys331 is the Nucleophile of the active site. The active site involves His429.

This sequence belongs to the CobB/CobQ family. CobQ subfamily.

It participates in cofactor biosynthesis; adenosylcobalamin biosynthesis. Functionally, catalyzes amidations at positions B, D, E, and G on adenosylcobyrinic A,C-diamide. NH(2) groups are provided by glutamine, and one molecule of ATP is hydrogenolyzed for each amidation. The chain is Cobyric acid synthase from Hahella chejuensis (strain KCTC 2396).